The sequence spans 460 residues: UDP-N-acetylmuramoylalanine--D-glutamate ligase (460 aa).

120-126 (GSNGKTT) serves as a coordination point for ATP.

The protein belongs to the MurCDEF family.

Its subcellular location is the cytoplasm. The enzyme catalyses UDP-N-acetyl-alpha-D-muramoyl-L-alanine + D-glutamate + ATP = UDP-N-acetyl-alpha-D-muramoyl-L-alanyl-D-glutamate + ADP + phosphate + H(+). It participates in cell wall biogenesis; peptidoglycan biosynthesis. In terms of biological role, cell wall formation. Catalyzes the addition of glutamate to the nucleotide precursor UDP-N-acetylmuramoyl-L-alanine (UMA). This chain is UDP-N-acetylmuramoylalanine--D-glutamate ligase, found in Lactobacillus johnsonii (strain CNCM I-12250 / La1 / NCC 533).